A 144-amino-acid chain; its full sequence is Granulocyte-macrophage colony-stimulating factor (144 aa).

The N-terminal stretch at methionine 1–serine 17 is a signal peptide. The O-linked (GalNAc...) serine glycan is linked to serine 22. O-linked (GalNAc...) threonine glycosylation occurs at threonine 27. Intrachain disulfides connect cysteine 71/cysteine 113 and cysteine 105/cysteine 138. Asparagine 86 is a glycosylation site (N-linked (GlcNAc...) asparagine).

The protein belongs to the GM-CSF family. In terms of assembly, monomer. The signaling GM-CSF receptor complex is a dodecamer of two head-to-head hexamers of two alpha, two beta, and two ligand subunits.

The protein resides in the secreted. Its function is as follows. Cytokine that stimulates the growth and differentiation of hematopoietic precursor cells from various lineages, including granulocytes, macrophages, eosinophils and erythrocytes. The polypeptide is Granulocyte-macrophage colony-stimulating factor (Csf2) (Rattus norvegicus (Rat)).